A 103-amino-acid chain; its full sequence is Small ribosomal subunit protein uS10 (103 aa).

It belongs to the universal ribosomal protein uS10 family. In terms of assembly, part of the 30S ribosomal subunit.

Involved in the binding of tRNA to the ribosomes. This Actinobacillus pleuropneumoniae serotype 5b (strain L20) protein is Small ribosomal subunit protein uS10.